Here is a 212-residue protein sequence, read N- to C-terminus: Regulatory protein RecX (212 aa).

Belongs to the RecX family.

The protein resides in the cytoplasm. Functionally, modulates RecA activity. The protein is Regulatory protein RecX of Clostridium botulinum (strain Alaska E43 / Type E3).